Reading from the N-terminus, the 711-residue chain is Ribosomal RNA large subunit methyltransferase K/L (711 aa).

The region spanning D42–L153 is the THUMP domain.

This sequence belongs to the methyltransferase superfamily. RlmKL family.

It is found in the cytoplasm. It carries out the reaction guanosine(2445) in 23S rRNA + S-adenosyl-L-methionine = N(2)-methylguanosine(2445) in 23S rRNA + S-adenosyl-L-homocysteine + H(+). The catalysed reaction is guanosine(2069) in 23S rRNA + S-adenosyl-L-methionine = N(2)-methylguanosine(2069) in 23S rRNA + S-adenosyl-L-homocysteine + H(+). Its function is as follows. Specifically methylates the guanine in position 2445 (m2G2445) and the guanine in position 2069 (m7G2069) of 23S rRNA. The sequence is that of Ribosomal RNA large subunit methyltransferase K/L from Xanthomonas campestris pv. campestris (strain 8004).